The chain runs to 287 residues: Bifunctional protein FolD (287 aa).

NADP(+)-binding positions include 169 to 171 and Ser-194; that span reads GRS.

The protein belongs to the tetrahydrofolate dehydrogenase/cyclohydrolase family. Homodimer.

The enzyme catalyses (6R)-5,10-methylene-5,6,7,8-tetrahydrofolate + NADP(+) = (6R)-5,10-methenyltetrahydrofolate + NADPH. It catalyses the reaction (6R)-5,10-methenyltetrahydrofolate + H2O = (6R)-10-formyltetrahydrofolate + H(+). Its pathway is one-carbon metabolism; tetrahydrofolate interconversion. Functionally, catalyzes the oxidation of 5,10-methylenetetrahydrofolate to 5,10-methenyltetrahydrofolate and then the hydrolysis of 5,10-methenyltetrahydrofolate to 10-formyltetrahydrofolate. This is Bifunctional protein FolD from Albidiferax ferrireducens (strain ATCC BAA-621 / DSM 15236 / T118) (Rhodoferax ferrireducens).